A 301-amino-acid polypeptide reads, in one-letter code: D-alanine--D-alanine ligase (301 aa).

In terms of domain architecture, ATP-grasp spans 99-294 (KCILKAANIR…FSELIDMIID (196 aa)). 126–181 (IEGMGYPVVVKPTHGGSSVATFIIKEEKDIKNAVTEAFKWDSEVIIEKFIKGDEIT) contributes to the ATP binding site. Mg(2+) contacts are provided by Asp248, Glu261, and Asn263.

Belongs to the D-alanine--D-alanine ligase family. Requires Mg(2+) as cofactor. It depends on Mn(2+) as a cofactor.

It is found in the cytoplasm. It catalyses the reaction 2 D-alanine + ATP = D-alanyl-D-alanine + ADP + phosphate + H(+). It functions in the pathway cell wall biogenesis; peptidoglycan biosynthesis. In terms of biological role, cell wall formation. The protein is D-alanine--D-alanine ligase of Clostridium botulinum (strain Eklund 17B / Type B).